Here is a 325-residue protein sequence, read N- to C-terminus: DNA-directed RNA polymerase subunit alpha (325 aa).

The interval 1–238 is alpha N-terminal domain (alpha-NTD); sequence MSPKNLLKGF…DHLTVFINFE (238 aa). Residues 255–325 form an alpha C-terminal domain (alpha-CTD) region; it reads LKAALSKHVE…MGLSFGMRDF (71 aa).

The protein belongs to the RNA polymerase alpha chain family. In terms of assembly, homodimer. The RNAP catalytic core consists of 2 alpha, 1 beta, 1 beta' and 1 omega subunit. When a sigma factor is associated with the core the holoenzyme is formed, which can initiate transcription.

The enzyme catalyses RNA(n) + a ribonucleoside 5'-triphosphate = RNA(n+1) + diphosphate. DNA-dependent RNA polymerase catalyzes the transcription of DNA into RNA using the four ribonucleoside triphosphates as substrates. In Leptospira biflexa serovar Patoc (strain Patoc 1 / Ames), this protein is DNA-directed RNA polymerase subunit alpha.